A 320-amino-acid chain; its full sequence is tRNA pseudouridine synthase B (320 aa).

The Nucleophile role is filled by Asp41. Disordered regions lie at residues 116-136 (PPQV…ARRG) and 259-284 (DQCQ…DPSA). Basic and acidic residues predominate over residues 125 to 136 (QGERAHARARRG). Polar residues predominate over residues 270–284 (SDQQESAPNQTDPSA).

It belongs to the pseudouridine synthase TruB family. Type 1 subfamily.

The catalysed reaction is uridine(55) in tRNA = pseudouridine(55) in tRNA. Functionally, responsible for synthesis of pseudouridine from uracil-55 in the psi GC loop of transfer RNAs. The polypeptide is tRNA pseudouridine synthase B (Prochlorococcus marinus (strain MIT 9313)).